A 64-amino-acid chain; its full sequence is Bactridin-2 (64 aa).

One can recognise an LCN-type CS-alpha/beta domain in the interval 1-63 (KDGYLVGNDG…TWNRATNRCG (63 aa)). 4 disulfides stabilise this stretch: Cys11-Cys62, Cys15-Cys37, Cys23-Cys43, and Cys27-Cys45.

It belongs to the long (4 C-C) scorpion toxin superfamily. Sodium channel inhibitor family. Beta subfamily. As to expression, expressed by the venom gland.

The protein localises to the secreted. Functionally, shows antibacterial activity against both Gram-positive bacteria (B.subtilis, M.luteus, E.faecalis) and Gram-negative bacteria (P.aeruginosa, Y.enterocolitica, A.calcoaceticus). Modifies membrane sodium permeability on Y.enterocolitica. Is toxic to mice, but is not to crabs. Induces concentration dependent haemolysis in human erythrocytes. Acts by inhibiting the sodium (Nav) currents. The protein is Bactridin-2 of Tityus discrepans (Venezuelan scorpion).